A 518-amino-acid chain; its full sequence is MGLESVVQTMNNQSPDNNSQSRTKTTNHFLIIEQSPASWEVGDTKMCVKSSTVENVSSACFKHQQSMGKMDEPRAVLQRSHSDLTCSCKQQSYVTHVETSATDSSLSSSSSRHGPSVVRMSFQTERYGSGIRNKENTSHYQNLVTHLPALPIDQKVPTNTFDSGGIPHNTTVYTDPGRFHSAVLGPHMPGNGFSNRTMLSQATGIIHGGLTYSNIPNSAFSPMAMTVHNSSAVPCNIRQDSCMKVDATIPAYCHSLPIPSIQLVPRLVCSVSESGKEQAAPDYFHSFSTSDILTYPKLVSSVSESGLDAKRVLKCCSIPGEQLQHAQRCTQQERASSETQTACVAFSSQQTTDVAMKTKDMWTMTSANDLTKGLKPALERRDAEVQTLPTMECKSVATSPAAAAESHSHVFPEVNLEQDLEAPKSPVREVRWDDEGMTWEVYGASVDPEVLGLAIQKHLEIQIEQFQTEPAQQTGKSDEDPLNKEPSSDKMEKKRPFRTMMHSLRYPSCCARSSTAVE.

2 disordered regions span residues 1 to 23 and 467 to 500; these read MGLE…QSRT and QTEP…FRTM. The span at 476-494 shows a compositional bias: basic and acidic residues; sequence KSDEDPLNKEPSSDKMEKK.

In terms of assembly, may interact with GNAO1.

Functionally, may be involved in neurite outgrowth. This Gallus gallus (Chicken) protein is GRIN2-like protein.